We begin with the raw amino-acid sequence, 211 residues long: Troponin I, cardiac muscle (211 aa).

The disordered stretch occupies residues 1–24 (MADESSDAAGEPQPAPAPVRRRSS). The residue at position 2 (alanine 2) is an N-acetylalanine. Serine 5 and serine 6 each carry phosphoserine. Residues serine 23 and serine 24 each carry the phosphoserine; by PKA and PKD/PRKD1 modification. The residue at position 27 (tyrosine 27) is a Phosphotyrosine. Phosphothreonine; by STK4/MST1 is present on threonine 32. The involved in binding TNC stretch occupies residues 33–80 (EPHAKKKSKISASRKLQLKTLMLQIAKQEMEREAEERRGEKGRVLRTR). 2 positions are modified to phosphoserine; by PKC/PRKCE: serine 43 and serine 45. Residue threonine 52 is modified to Phosphothreonine; by STK4/MST1. Threonine 79 bears the Phosphothreonine mark. A phosphothreonine; by STK4/MST1 mark is found at threonine 130 and threonine 144. An involved in binding TNC and actin region spans residues 130 to 151 (TQKIYDLRGKFKRPTLRRVRIS). Phosphoserine is present on residues serine 151, serine 167, and serine 200.

This sequence belongs to the troponin I family. In terms of assembly, interacts with TRIM63. Binds to actin and tropomyosin. Interacts with STK4/MST1. Phosphorylated at Ser-23 and Ser-24 by PRKD1; phosphorylation reduces myofilament calcium sensitivity. Phosphorylated preferentially at Thr-32. Phosphorylation by STK4/MST1 alters its binding affinity to TNNC1 (cardiac Tn-C) and TNNT2 (cardiac Tn-T). Phosphorylated at Ser-43 and Ser-45 by PRKCE; phosphorylation increases myocardium contractile dysfunction.

Its function is as follows. Troponin I is the inhibitory subunit of troponin, the thin filament regulatory complex which confers calcium-sensitivity to striated muscle actomyosin ATPase activity. This is Troponin I, cardiac muscle (Tnni3) from Mus musculus (Mouse).